Consider the following 177-residue polypeptide: ATP-dependent protease subunit HslV (177 aa).

Threonine 2 is a catalytic residue. Na(+) is bound by residues glycine 157, cysteine 160, and threonine 163.

It belongs to the peptidase T1B family. HslV subfamily. As to quaternary structure, a double ring-shaped homohexamer of HslV is capped on each side by a ring-shaped HslU homohexamer. The assembly of the HslU/HslV complex is dependent on binding of ATP.

The protein resides in the cytoplasm. The catalysed reaction is ATP-dependent cleavage of peptide bonds with broad specificity.. With respect to regulation, allosterically activated by HslU binding. In terms of biological role, protease subunit of a proteasome-like degradation complex believed to be a general protein degrading machinery. This is ATP-dependent protease subunit HslV from Aeromonas hydrophila subsp. hydrophila (strain ATCC 7966 / DSM 30187 / BCRC 13018 / CCUG 14551 / JCM 1027 / KCTC 2358 / NCIMB 9240 / NCTC 8049).